The following is a 215-amino-acid chain: Rho-related GTP-binding protein RhoF (215 aa).

N-acetylmethionine is present on Met-1. Residue 30–37 participates in GTP binding; that stretch reads GDGGCGKT. The Effector region motif lies at 52–60; that stretch reads YAPSVFEKY. GTP is bound by residues 77 to 81 and 135 to 138; these read DTAGQ and CKTD. The residue at position 212 (Cys-212) is a Cysteine methyl ester. A lipid anchor (S-geranylgeranyl cysteine) is attached at Cys-212. Residues 213 to 215 constitute a propeptide, removed in mature form; sequence LLL.

This sequence belongs to the small GTPase superfamily. Rho family.

It is found in the cell membrane. The protein resides in the cytoplasm. It localises to the cytoskeleton. Its function is as follows. Plasma membrane-associated small GTPase which cycles between an active GTP-bound and an inactive GDP-bound state. Causes the formation of thin, actin-rich surface projections called filopodia. Functions cooperatively with CDC42 and Rac to generate additional structures, increasing the diversity of actin-based morphology. The polypeptide is Rho-related GTP-binding protein RhoF (RHOF) (Bos taurus (Bovine)).